A 352-amino-acid chain; its full sequence is 4-hydroxy-2-oxovalerate aldolase 4 (352 aa).

Residues 9-261 (IRVTDSSLRD…RTGIDTLKII (253 aa)) enclose the Pyruvate carboxyltransferase domain. A substrate-binding site is contributed by 17 to 18 (RD). A Mn(2+)-binding site is contributed by Asp-18. The Proton acceptor role is filled by His-21. 2 residues coordinate substrate: Ser-171 and His-200. Positions 200 and 202 each coordinate Mn(2+). Tyr-291 is a substrate binding site.

This sequence belongs to the 4-hydroxy-2-oxovalerate aldolase family.

The enzyme catalyses (S)-4-hydroxy-2-oxopentanoate = acetaldehyde + pyruvate. This is 4-hydroxy-2-oxovalerate aldolase 4 from Rhodococcus jostii (strain RHA1).